A 398-amino-acid polypeptide reads, in one-letter code: Tryptophan synthase beta chain (398 aa).

The residue at position 88 (lysine 88) is an N6-(pyridoxal phosphate)lysine.

It belongs to the TrpB family. In terms of assembly, tetramer of two alpha and two beta chains. Pyridoxal 5'-phosphate is required as a cofactor.

The catalysed reaction is (1S,2R)-1-C-(indol-3-yl)glycerol 3-phosphate + L-serine = D-glyceraldehyde 3-phosphate + L-tryptophan + H2O. It functions in the pathway amino-acid biosynthesis; L-tryptophan biosynthesis; L-tryptophan from chorismate: step 5/5. The beta subunit is responsible for the synthesis of L-tryptophan from indole and L-serine. This Histophilus somni (strain 2336) (Haemophilus somnus) protein is Tryptophan synthase beta chain.